The primary structure comprises 490 residues: Betaine aldehyde dehydrogenase (490 aa).

K(+) is bound by residues T26, I27, and D93. 150 to 152 (GAW) contacts NAD(+). The Charge relay system role is filled by K162. Residue 176-179 (KPSE) participates in NAD(+) binding. Residue V180 coordinates K(+). Position 230-233 (230-233 (GVAS)) interacts with NAD(+). Position 246 (L246) interacts with K(+). Catalysis depends on E252, which acts as the Proton acceptor. G254, C286, and E387 together coordinate NAD(+). Residue C286 is the Nucleophile of the active site. C286 bears the Cysteine sulfenic acid (-SOH) mark. K(+) contacts are provided by K457 and G460. Catalysis depends on E464, which acts as the Charge relay system.

It belongs to the aldehyde dehydrogenase family. As to quaternary structure, dimer of dimers. It depends on K(+) as a cofactor.

The enzyme catalyses betaine aldehyde + NAD(+) + H2O = glycine betaine + NADH + 2 H(+). It participates in amine and polyamine biosynthesis; betaine biosynthesis via choline pathway; betaine from betaine aldehyde: step 1/1. Its function is as follows. Involved in the biosynthesis of the osmoprotectant glycine betaine. Catalyzes the irreversible oxidation of betaine aldehyde to the corresponding acid. The protein is Betaine aldehyde dehydrogenase of Escherichia coli O6:K15:H31 (strain 536 / UPEC).